The chain runs to 180 residues: Hypoxanthine-guanine phosphoribosyltransferase (180 aa).

Diphosphate-binding residues include Lys-43 and Gly-44. Residues Glu-99 and Asp-100 each contribute to the Mg(2+) site. Asp-103 serves as the catalytic Proton acceptor. GMP-binding positions include Lys-131, 152 to 153 (FI), and Asp-159. Diphosphate is bound at residue Arg-165.

It belongs to the purine/pyrimidine phosphoribosyltransferase family. Mg(2+) serves as cofactor.

The protein resides in the cytoplasm. The enzyme catalyses IMP + diphosphate = hypoxanthine + 5-phospho-alpha-D-ribose 1-diphosphate. The catalysed reaction is GMP + diphosphate = guanine + 5-phospho-alpha-D-ribose 1-diphosphate. The protein operates within purine metabolism; IMP biosynthesis via salvage pathway; IMP from hypoxanthine: step 1/1. It participates in purine metabolism; GMP biosynthesis via salvage pathway; GMP from guanine: step 1/1. Functionally, purine salvage pathway enzyme that catalyzes the transfer of the ribosyl-5-phosphate group from 5-phospho-alpha-D-ribose 1-diphosphate (PRPP) to the N9 position of the 6-oxopurines hypoxanthine and guanine to form the corresponding ribonucleotides IMP (inosine 5'-monophosphate) and GMP (guanosine 5'-monophosphate), with the release of PPi. In Streptococcus agalactiae serotype III (strain NEM316), this protein is Hypoxanthine-guanine phosphoribosyltransferase (hpt).